Consider the following 979-residue polypeptide: Putative cellulose synthase-like protein D6 (979 aa).

The tract at residues 1–24 is disordered; it reads MMDGESPLRHPRISHVSNSGSDFG. The span at 14–24 shows a compositional bias: low complexity; it reads SHVSNSGSDFG. The next 2 membrane-spanning stretches (helical) occupy residues 116–136 and 147–167; these read IIIALYRILIVVRVVSLALFL and ALWLWLLSVICELWFAFSWLL. Active-site residues include aspartate 247 and aspartate 683. The next 6 helical transmembrane spans lie at 765 to 785, 788 to 808, 837 to 857, 882 to 902, 913 to 933, and 946 to 966; these read IFILTYCFLPPLSLFSGHFVV, LTGSFLIYLLIITLSLCGLAV, LVAVLQGILKVIAGVEISFTL, ALMIPPLTIIILNIVAILFAV, WSNLLGGTFFASWVLLHMYPF, and TVVYVWSGLIAICLSLLYITI.

It belongs to the glycosyltransferase 2 family. Plant cellulose synthase-like D subfamily.

Its subcellular location is the golgi apparatus membrane. Functionally, thought to be a Golgi-localized beta-glycan synthase that polymerize the backbones of noncellulosic polysaccharides (hemicelluloses) of plant cell wall. This Arabidopsis thaliana (Mouse-ear cress) protein is Putative cellulose synthase-like protein D6 (CSLD6).